The sequence spans 449 residues: Dynein regulatory complex protein 10 (449 aa).

Residues 90–125 (AVREHEDLCQVLLENVRCLKEKERQLQEQKEAEEEG) adopt a coiled-coil conformation. An IQ domain is found at 400 to 429 (MVRAATLIQALWKGYLVRSLLRSKKKRGKG). The segment at 422 to 449 (SKKKRGKGKAKDKEKGKQKGKEKGKGKK) is disordered. A compositionally biased stretch (basic and acidic residues) spans 430 to 449 (KAKDKEKGKQKGKEKGKGKK).

The protein belongs to the DRC10 family. As to quaternary structure, component of the nexin-dynein regulatory complex (N-DRC). Interacts with CFAP52.

It is found in the cytoplasm. The protein localises to the cytoskeleton. Its subcellular location is the flagellum axoneme. Its function is as follows. Component of the nexin-dynein regulatory complex (N-DRC), a key regulator of ciliary/flagellar motility which maintains the alignment and integrity of the distal axoneme and regulates microtubule sliding in motile axonemes. In Homo sapiens (Human), this protein is Dynein regulatory complex protein 10 (IQCD).